Reading from the N-terminus, the 389-residue chain is Cytochrome b (389 aa).

4 helical membrane passes run 32–52, 76–98, 113–133, and 179–199; these read FGSLLGICLVLQILTGCFLAM, WIVRYTHANVASFFFIFVYAHIG, LWSIGVIILVLMMAIGFLGYV, and FFSLHYILPFVLAALVVAHFM. Residues histidine 82 and histidine 96 each coordinate heme b. Residues histidine 183 and histidine 197 each coordinate heme b. Histidine 202 contributes to the a ubiquinone binding site. 4 helical membrane passes run 225–245, 289–309, 321–341, and 348–368; these read FIFKDLVTIFAFFWILSVIVF, LLGVVAMFGSLLILLVLPLTD, AMKFFFWFFVVNFIMLFWLGS, and YLEIGQLSTTFYFSFFLVIVP.

This sequence belongs to the cytochrome b family. In terms of assembly, fungal cytochrome b-c1 complex contains 10 subunits; 3 respiratory subunits, 2 core proteins and 5 low-molecular weight proteins. Cytochrome b-c1 complex is a homodimer. Heme b serves as cofactor.

Its subcellular location is the mitochondrion inner membrane. In terms of biological role, component of the ubiquinol-cytochrome c reductase complex (complex III or cytochrome b-c1 complex) that is part of the mitochondrial respiratory chain. The b-c1 complex mediates electron transfer from ubiquinol to cytochrome c. Contributes to the generation of a proton gradient across the mitochondrial membrane that is then used for ATP synthesis. In Strobilurus tenacellus, this protein is Cytochrome b (COB).